We begin with the raw amino-acid sequence, 51 residues long: Insulin (51 aa).

Disulfide bonds link Cys-7–Cys-37, Cys-19–Cys-50, and Cys-36–Cys-41.

It belongs to the insulin family. Heterodimer of a B chain and an A chain linked by two disulfide bonds.

The protein localises to the secreted. Its function is as follows. Insulin decreases blood glucose concentration. It increases cell permeability to monosaccharides, amino acids and fatty acids. It accelerates glycolysis, the pentose phosphate cycle, and glycogen synthesis in liver. This Balaenoptera physalus (Fin whale) protein is Insulin (INS).